The primary structure comprises 499 residues: Protein-tyrosine sulfotransferase (499 aa).

Topologically, residues Met-1–Lys-9 are cytoplasmic. Residues Val-10 to Glu-30 traverse the membrane as a helical; Signal-anchor for type II membrane protein segment. At Leu-31 to Thr-499 the chain is on the lumenal side. 3'-phosphoadenylyl sulfate is bound at residue Arg-80–Thr-84. Cys-98 and Cys-158 form a disulfide bridge. Glu-101 serves as the catalytic Proton donor/acceptor. The segment at Arg-103 to Arg-107 is interaction with peptide substrate. Residues Arg-185, Ser-193, and Arg-197 each contribute to the 3'-phosphoadenylyl sulfate site. An intrachain disulfide couples Cys-227 to Cys-235. 3'-phosphoadenylyl sulfate contacts are provided by residues Tyr-240, Ser-287–Asn-296, and Lys-302. Asn-346 and Asn-380 each carry an N-linked (GlcNAc...) asparagine glycan. 2 disordered regions span residues Lys-362–Lys-460 and Asn-476–Thr-499. Low complexity-rich tracts occupy residues Thr-375–Glu-400 and His-408–Gln-434. Positions Glu-443–Lys-460 are enriched in basic and acidic residues. Low complexity predominate over residues Asn-476–Ile-491.

It belongs to the protein sulfotransferase family.

Its subcellular location is the golgi apparatus membrane. The catalysed reaction is L-tyrosyl-[protein] + 3'-phosphoadenylyl sulfate = O-sulfo-L-tyrosine-[protein] + adenosine 3',5'-bisphosphate + H(+). Functionally, catalyzes the O-sulfation of tyrosine residues within acidic motifs of polypeptides. Has a role in protein secretion. The polypeptide is Protein-tyrosine sulfotransferase (Drosophila melanogaster (Fruit fly)).